Consider the following 276-residue polypeptide: Ubiquinone biosynthesis protein coq11, mitochondrial (276 aa).

Belongs to the NAD(P)-dependent epimerase/dehydratase family.

The protein resides in the mitochondrion. Its function is as follows. Acts in the coenzyme Q biosynthetic pathway. The chain is Ubiquinone biosynthesis protein coq11, mitochondrial from Schizosaccharomyces pombe (strain 972 / ATCC 24843) (Fission yeast).